Reading from the N-terminus, the 250-residue chain is MTNQKQTTHFGFKSVDWNEKEKKVAEVFHSVAKNYDRMNDLMSLGIHHLWKRYTIELSHVRPGQSVLDLAGGSGDLTRLLLQKVGDSGQVILADINAAMLHVGRDRLLDEGLFKNIRYVQGNAQCLPFADNSFHCITMGFGLRNVTDKDEALQSMYRVCKPGGKLMVLEFSTPVFPGLKPVYDWYSFNILPKIGKFVANDEASYQYLAESIRMHPDQETLKAMIERVGFEDCHYHNLSGGIVALHIAYKY.

S-adenosyl-L-methionine-binding positions include S73, D94, and 122 to 123 (NA).

The protein belongs to the class I-like SAM-binding methyltransferase superfamily. MenG/UbiE family.

The enzyme catalyses a 2-demethylmenaquinol + S-adenosyl-L-methionine = a menaquinol + S-adenosyl-L-homocysteine + H(+). The catalysed reaction is a 2-methoxy-6-(all-trans-polyprenyl)benzene-1,4-diol + S-adenosyl-L-methionine = a 5-methoxy-2-methyl-3-(all-trans-polyprenyl)benzene-1,4-diol + S-adenosyl-L-homocysteine + H(+). Its pathway is quinol/quinone metabolism; menaquinone biosynthesis; menaquinol from 1,4-dihydroxy-2-naphthoate: step 2/2. It participates in cofactor biosynthesis; ubiquinone biosynthesis. Functionally, methyltransferase required for the conversion of demethylmenaquinol (DMKH2) to menaquinol (MKH2) and the conversion of 2-polyprenyl-6-methoxy-1,4-benzoquinol (DDMQH2) to 2-polyprenyl-3-methyl-6-methoxy-1,4-benzoquinol (DMQH2). The sequence is that of Ubiquinone/menaquinone biosynthesis C-methyltransferase UbiE from Legionella pneumophila subsp. pneumophila (strain Philadelphia 1 / ATCC 33152 / DSM 7513).